The primary structure comprises 351 residues: sn-1 oleoyl-lipid 12-desaturase (351 aa).

The interval 1-20 (MTLSIVKSEDSSSRPSAVPS) is disordered. Helical transmembrane passes span 44 to 62 (AWMT…WLGI) and 68 to 88 (FLLP…FVIG). The short motif at 89–93 (HDCGH) is the Histidine box-1 element. A helical transmembrane segment spans residues 100-120 (VWVNDWVGHILFLPIIYPFHS). Positions 125–129 (HNQHH) match the Histidine box-2 motif. 2 consecutive transmembrane segments (helical) span residues 199 to 219 (LLVI…IGVW) and 221 to 241 (FVKF…TFTL). Positions 289–293 (HHVTT) match the Histidine box-3 motif.

Belongs to the fatty acid desaturase type 2 family. Requires Fe(2+) as cofactor.

The protein resides in the cellular thylakoid membrane. The catalysed reaction is a 1-[(9Z)-octadecenoyl]-2-acyl-glycerolipid + 2 reduced [2Fe-2S]-[ferredoxin] + O2 + 2 H(+) = a 1-[(9Z,12Z)-octadecdienoyl]-2-acyl-glycerolipid + 2 oxidized [2Fe-2S]-[ferredoxin] + 2 H2O. Its pathway is lipid metabolism; polyunsaturated fatty acid biosynthesis. Desaturase involved in fatty acid biosynthesis. Introduces a double bond at carbon 12 of oleoyl groups (18:1) attached to the sn-1 position of the glycerol moiety of membrane glycerolipids. The chain is sn-1 oleoyl-lipid 12-desaturase from Arthrospira platensis (Spirulina platensis).